The sequence spans 682 residues: Glutamine--fructose-6-phosphate aminotransferase [isomerizing] 2 (682 aa).

Residue Cys-2 is the For GATase activity of the active site. A Glutamine amidotransferase type-2 domain is found at 2–288 (CGIFAYMNYR…DDDIAAVADG (287 aa)). The residue at position 244 (Ser-244) is a Phosphoserine. SIS domains follow at residues 360-499 (HLKE…DRIS) and 531-672 (LALE…VDFP). Substrate-binding positions include 377–378 (TS), 422–424 (SQS), Thr-427, and His-578.

In terms of tissue distribution, highest levels of expression in heart, placenta, and spinal cord.

It carries out the reaction D-fructose 6-phosphate + L-glutamine = D-glucosamine 6-phosphate + L-glutamate. The protein operates within nucleotide-sugar biosynthesis; UDP-N-acetyl-alpha-D-glucosamine biosynthesis; alpha-D-glucosamine 6-phosphate from D-fructose 6-phosphate: step 1/1. Controls the flux of glucose into the hexosamine pathway. Most likely involved in regulating the availability of precursors for N- and O-linked glycosylation of proteins. The protein is Glutamine--fructose-6-phosphate aminotransferase [isomerizing] 2 (GFPT2) of Homo sapiens (Human).